A 372-amino-acid polypeptide reads, in one-letter code: MTYCKRGTEGLIYLEDGTLLRGCGFGAKGVRYGEVVFTTAMNGYPESMTDPSYRGQILIITHPLVGNYGVPNPIVRNGILQNFESEQIQIEGLVVTEETDPSKWNSSKSLHQWMAEQGIPGVSSVDTRLLVKKVRTLGSMMGVIASGEHVEDPRKYIEMRYDEIDFTKFTSPKSPIIHQNNSPDIIVLVDCGIKHGILEELYKTGFTIVRVPCKSSADEIMNYSPKGIVFGNGPGNPNILKDLVKNFSAVMEYKLPTLGICLGHQVATLALGGNVRKMKFGHRAINKPVTDISNNKCYISTHNHGYGVYKEDIPPDTQIWFVNPDDGVVEGLIHKRLPLITTQFHPEARPGPNDTTWVFQKFKKMVIKDEGN.

The CPSase stretch occupies residues 1–186 (MTYCKRGTEG…IHQNNSPDII (186 aa)). L-glutamine-binding residues include serine 52, glycine 233, and glycine 235. Residues 185 to 372 (IIVLVDCGIK…KKMVIKDEGN (188 aa)) enclose the Glutamine amidotransferase type-1 domain. The Nucleophile role is filled by cysteine 261. Residues leucine 262, glutamine 265, asparagine 303, glycine 305, and tyrosine 306 each contribute to the L-glutamine site. Catalysis depends on residues histidine 345 and glutamate 347.

This sequence belongs to the CarA family. As to quaternary structure, composed of two chains; the small (or glutamine) chain promotes the hydrolysis of glutamine to ammonia, which is used by the large (or ammonia) chain to synthesize carbamoyl phosphate. Tetramer of heterodimers (alpha,beta)4.

The enzyme catalyses hydrogencarbonate + L-glutamine + 2 ATP + H2O = carbamoyl phosphate + L-glutamate + 2 ADP + phosphate + 2 H(+). It catalyses the reaction L-glutamine + H2O = L-glutamate + NH4(+). It functions in the pathway amino-acid biosynthesis; L-arginine biosynthesis; carbamoyl phosphate from bicarbonate: step 1/1. The protein operates within pyrimidine metabolism; UMP biosynthesis via de novo pathway; (S)-dihydroorotate from bicarbonate: step 1/3. Its function is as follows. Small subunit of the glutamine-dependent carbamoyl phosphate synthetase (CPSase). CPSase catalyzes the formation of carbamoyl phosphate from the ammonia moiety of glutamine, carbonate, and phosphate donated by ATP, constituting the first step of 2 biosynthetic pathways, one leading to arginine and/or urea and the other to pyrimidine nucleotides. The small subunit (glutamine amidotransferase) binds and cleaves glutamine to supply the large subunit with the substrate ammonia. The sequence is that of Carbamoyl phosphate synthase small chain from Metallosphaera sedula (strain ATCC 51363 / DSM 5348 / JCM 9185 / NBRC 15509 / TH2).